Here is a 196-residue protein sequence, read N- to C-terminus: Endoribonuclease YbeY (196 aa).

Zn(2+) contacts are provided by histidine 120, histidine 124, and histidine 130.

It belongs to the endoribonuclease YbeY family. The cofactor is Zn(2+).

It localises to the cytoplasm. Single strand-specific metallo-endoribonuclease involved in late-stage 70S ribosome quality control and in maturation of the 3' terminus of the 16S rRNA. This Corynebacterium glutamicum (strain ATCC 13032 / DSM 20300 / JCM 1318 / BCRC 11384 / CCUG 27702 / LMG 3730 / NBRC 12168 / NCIMB 10025 / NRRL B-2784 / 534) protein is Endoribonuclease YbeY.